Reading from the N-terminus, the 355-residue chain is Phosphoribosylformylglycinamidine cyclo-ligase (355 aa).

It belongs to the AIR synthase family.

It is found in the cytoplasm. It catalyses the reaction 2-formamido-N(1)-(5-O-phospho-beta-D-ribosyl)acetamidine + ATP = 5-amino-1-(5-phospho-beta-D-ribosyl)imidazole + ADP + phosphate + H(+). The protein operates within purine metabolism; IMP biosynthesis via de novo pathway; 5-amino-1-(5-phospho-D-ribosyl)imidazole from N(2)-formyl-N(1)-(5-phospho-D-ribosyl)glycinamide: step 2/2. In Paraburkholderia xenovorans (strain LB400), this protein is Phosphoribosylformylglycinamidine cyclo-ligase.